The sequence spans 786 residues: Receptor-like protein 30 (786 aa).

Positions Met1–Ala30 are cleaved as a signal peptide. Residues Ser31–Trp739 lie on the Extracellular side of the membrane. N-linked (GlcNAc...) asparagine glycans are attached at residues Asn67, Asn98, Asn115, and Asn133. LRR repeat units lie at residues Leu110–Asn133, Leu134–Leu158, Asn159–Asn181, and Thr183–Leu204. N-linked (GlcNAc...) asparagine glycosylation is found at Asn181, Asn199, and Asn206. LRR repeat units follow at residues Leu207–Leu231, Asn233–Ile255, Ser257–Ser279, Ser280–Ile304, His305–Leu328, Val329–Leu352, Thr354–Gly375, Glu376–Gln399, Arg400–Ser423, Tyr425–Asn447, Ala448–Cys472, Gly474–Leu496, Pro497–His524, and Arg526–Asn546. Asn276 carries N-linked (GlcNAc...) asparagine glycosylation. A glycan (N-linked (GlcNAc...) asparagine) is linked at Asn338. Residues Asn413, Asn422, Asn434, Asn447, and Asn471 are each glycosylated (N-linked (GlcNAc...) asparagine). Asn558 carries an N-linked (GlcNAc...) asparagine glycan. LRR repeat units follow at residues Ile596–Leu621, Lys622–Leu645, Thr646–Leu669, and Phe671–Ser694. N-linked (GlcNAc...) asparagine glycans are attached at residues Asn628 and Asn644. Residue Asn676 is glycosylated (N-linked (GlcNAc...) asparagine). The chain crosses the membrane as a helical span at residues Ile740–Phe760. Over Phe761–Arg786 the chain is Cytoplasmic.

Belongs to the RLP family.

Its subcellular location is the cell membrane. Functionally, receptor for microbe-associated molecular patterns (MAMPs) that induces a BAK1-dependent basal immune response to necrotrophic fungi (e.g. S.sclerotiorum) in the presence of MAMPs (e.g. flg22 and SCLEROTINIA CULTURE FILTRATE ELICITOR1 (SCFE1) from the necrotrophic fungal pathogen S.sclerotiorum). Functionality seems to depend on the presence of the receptor kinase SOBIR1 as an adapter protein. Required for full non-host resistance to bacterial pathogens (e.g. P.syringae pv phaseolicola). The protein is Receptor-like protein 30 of Arabidopsis thaliana (Mouse-ear cress).